A 227-amino-acid chain; its full sequence is (S)-2-haloacid dehalogenase (227 aa).

The active-site Nucleophile is the D10. Residues 11 to 12 (LY), R41, and 118 to 119 (SN) contribute to the an (S)-2-haloacid site. The interval 175–180 (SSNAWD) is important for catalytic activity.

The protein belongs to the HAD-like hydrolase superfamily. S-2-haloalkanoic acid dehalogenase family.

The enzyme catalyses an (S)-2-haloacid + H2O = a (2R)-2-hydroxycarboxylate + a halide anion + H(+). It carries out the reaction (S)-2-chloropropanoate + H2O = (R)-lactate + chloride + H(+). Its function is as follows. Catalyzes the hydrolytic dehalogenation of small (S)-2-haloalkanoic acids to yield the corresponding (R)-2-hydroxyalkanoic acids. Acts on acids of short chain lengths, C(2) to C(4), with inversion of configuration at C-2. Active with 2-halogenated carboxylic acids and converts only the S-isomer (or L-isomer) of 2-chloropropionic acid with inversion of configuration to produce R-lactate (or D-isomer). This chain is (S)-2-haloacid dehalogenase (dhl VII), found in Pseudomonas fluorescens.